The sequence spans 375 residues: Carbamoyl phosphate synthase small chain (375 aa).

Residues 1 to 186 are CPSase; the sequence is MRALLALEDG…LEPGGCAWVG (186 aa). Residues Ser-45, Gly-238, and Gly-240 each contribute to the L-glutamine site. The Glutamine amidotransferase type-1 domain occupies 190–375; it reads RLVVYDFGIK…RNMVREAAGC (186 aa). The active-site Nucleophile is Cys-265. Residues Leu-266, Gln-269, Asn-307, Gly-309, and Phe-310 each coordinate L-glutamine. Catalysis depends on residues His-348 and Glu-350.

Belongs to the CarA family. As to quaternary structure, composed of two chains; the small (or glutamine) chain promotes the hydrolysis of glutamine to ammonia, which is used by the large (or ammonia) chain to synthesize carbamoyl phosphate. Tetramer of heterodimers (alpha,beta)4.

It catalyses the reaction hydrogencarbonate + L-glutamine + 2 ATP + H2O = carbamoyl phosphate + L-glutamate + 2 ADP + phosphate + 2 H(+). The catalysed reaction is L-glutamine + H2O = L-glutamate + NH4(+). It participates in amino-acid biosynthesis; L-arginine biosynthesis; carbamoyl phosphate from bicarbonate: step 1/1. It functions in the pathway pyrimidine metabolism; UMP biosynthesis via de novo pathway; (S)-dihydroorotate from bicarbonate: step 1/3. Functionally, small subunit of the glutamine-dependent carbamoyl phosphate synthetase (CPSase). CPSase catalyzes the formation of carbamoyl phosphate from the ammonia moiety of glutamine, carbonate, and phosphate donated by ATP, constituting the first step of 2 biosynthetic pathways, one leading to arginine and/or urea and the other to pyrimidine nucleotides. The small subunit (glutamine amidotransferase) binds and cleaves glutamine to supply the large subunit with the substrate ammonia. This is Carbamoyl phosphate synthase small chain from Nitratidesulfovibrio vulgaris (strain ATCC 29579 / DSM 644 / CCUG 34227 / NCIMB 8303 / VKM B-1760 / Hildenborough) (Desulfovibrio vulgaris).